We begin with the raw amino-acid sequence, 500 residues long: tRNA modification GTPase MnmE (500 aa).

(6S)-5-formyl-5,6,7,8-tetrahydrofolate contacts are provided by R24, E120, and K159. The TrmE-type G domain maps to 256 to 420 (GIPVAIIGET…LEKKLVQAAA (165 aa)). N266 provides a ligand contact to K(+). GTP-binding positions include 266–271 (NAGKST), 285–291 (SDIHGTT), and 310–313 (DTAG). Residue S270 participates in Mg(2+) binding. S285, I287, and T290 together coordinate K(+). A Mg(2+)-binding site is contributed by T291. Position 500 (K500) interacts with (6S)-5-formyl-5,6,7,8-tetrahydrofolate.

This sequence belongs to the TRAFAC class TrmE-Era-EngA-EngB-Septin-like GTPase superfamily. TrmE GTPase family. Homodimer. Heterotetramer of two MnmE and two MnmG subunits. It depends on K(+) as a cofactor.

It localises to the cytoplasm. Functionally, exhibits a very high intrinsic GTPase hydrolysis rate. Involved in the addition of a carboxymethylaminomethyl (cmnm) group at the wobble position (U34) of certain tRNAs, forming tRNA-cmnm(5)s(2)U34. This Phocaeicola vulgatus (strain ATCC 8482 / DSM 1447 / JCM 5826 / CCUG 4940 / NBRC 14291 / NCTC 11154) (Bacteroides vulgatus) protein is tRNA modification GTPase MnmE.